The primary structure comprises 1408 residues: DNA-directed RNA polymerase subunit beta' (1408 aa).

The Zn(2+) site is built by Cys-70, Cys-72, Cys-85, and Cys-88. The Mg(2+) site is built by Asp-460, Asp-462, and Asp-464. Residues Cys-814, Cys-888, Cys-895, and Cys-898 each coordinate Zn(2+).

The protein belongs to the RNA polymerase beta' chain family. The RNAP catalytic core consists of 2 alpha, 1 beta, 1 beta' and 1 omega subunit. When a sigma factor is associated with the core the holoenzyme is formed, which can initiate transcription. The cofactor is Mg(2+). Requires Zn(2+) as cofactor.

The catalysed reaction is RNA(n) + a ribonucleoside 5'-triphosphate = RNA(n+1) + diphosphate. DNA-dependent RNA polymerase catalyzes the transcription of DNA into RNA using the four ribonucleoside triphosphates as substrates. The sequence is that of DNA-directed RNA polymerase subunit beta' from Serratia proteamaculans (strain 568).